The following is a 510-amino-acid chain: NAD(P)H-quinone oxidoreductase subunit 2 B, chloroplastic (510 aa).

13 consecutive transmembrane segments (helical) span residues 24–44 (LLLF…GLIL), 57–77 (IPWL…ALLF), 99–119 (IFQF…VEYI), 124–144 (MAIT…MFLC), 150–170 (ITIF…SGYT), 183–203 (YLLM…WLYG), 227–247 (PGIS…LSPA), 295–315 (WHLL…LIAI), 323–343 (MLAY…IVGD), 347–367 (GYAS…GTFA), 395–415 (ALSS…AGFF), 418–438 (LHLF…IGLL), and 484–504 (MIVC…IIAI).

Belongs to the complex I subunit 2 family. As to quaternary structure, NDH is composed of at least 16 different subunits, 5 of which are encoded in the nucleus.

The protein localises to the plastid. It localises to the chloroplast thylakoid membrane. It carries out the reaction a plastoquinone + NADH + (n+1) H(+)(in) = a plastoquinol + NAD(+) + n H(+)(out). It catalyses the reaction a plastoquinone + NADPH + (n+1) H(+)(in) = a plastoquinol + NADP(+) + n H(+)(out). In terms of biological role, NDH shuttles electrons from NAD(P)H:plastoquinone, via FMN and iron-sulfur (Fe-S) centers, to quinones in the photosynthetic chain and possibly in a chloroplast respiratory chain. The immediate electron acceptor for the enzyme in this species is believed to be plastoquinone. Couples the redox reaction to proton translocation, and thus conserves the redox energy in a proton gradient. This is NAD(P)H-quinone oxidoreductase subunit 2 B, chloroplastic from Liriodendron tulipifera (Tuliptree).